We begin with the raw amino-acid sequence, 97 residues long: MNIRPLHDRVIVKRKEVESKSAGGIVLTGTAAGKSTRGEVLAVGNGRILESGDVKALCVKVGDIVIFNDGYGVKSEKIDNEEVLIMSESDILAIVEA.

This sequence belongs to the GroES chaperonin family. Heptamer of 7 subunits arranged in a ring. Interacts with the chaperonin GroEL.

It is found in the cytoplasm. Together with the chaperonin GroEL, plays an essential role in assisting protein folding. The GroEL-GroES system forms a nano-cage that allows encapsulation of the non-native substrate proteins and provides a physical environment optimized to promote and accelerate protein folding. GroES binds to the apical surface of the GroEL ring, thereby capping the opening of the GroEL channel. This is Co-chaperonin GroES from Photorhabdus laumondii subsp. laumondii (strain DSM 15139 / CIP 105565 / TT01) (Photorhabdus luminescens subsp. laumondii).